We begin with the raw amino-acid sequence, 380 residues long: Transporter PPE51 (380 aa).

An N-acetylmethionine modification is found at M1.

Belongs to the mycobacterial PPE family. As to quaternary structure, interacts with PE19 and PE25.

Its subcellular location is the cell outer membrane. Functionally, small molecule-selective channel required for the uptake of nutrients across the outer mycomembrane. Transports glycerol and glucose. Involved in sensitivity to M.tuberculosis growth inhibitory agrichemical 3,3-bis-di(methylsulfonyl)propionamide (3bMP1). Transports maltose and lactose disaccharides. Involved in sensitivity to bactericidal thio-disaccharide T-6 compound (1,6-anhydro-3-deoxy-4-S-(2,3,4,6-tetra-O-acetyl-beta-D-glucopyranosyl)-D-glycero-hexopyranos-2-ulose). Transports extracellular trehalose, a component of the cell envelope, and trehalose analog, 6-azido trehalose (6-TreAz), which has antimycobacterial activity. Its function is as follows. Plays a role in response to starvation and stress, likely environment within the host. Inhibits canonical autophagy in infected mouse RAW264.7 macrophages. Inhibits autophagy and enhances intracellular bacterial survival when expressed in human macrophage-like THP-1 cells. Inhibits Toll-like receptor 2 (TLR2)-dependent signaling leading to autophagy inhibition, increased intracellular bacterial survival, reduced phagocytosis and reduced secretion of interleukin 6 (IL-6) and IL-1 in infected mouse primary bone marrow-derived macrophage (BMDM) cells. Required for virulence and persistence in the lungs and spleens of intranasally infected C57BL/6J mice. Blocks the antibacterial effects of TLR2 activation, suppresses MHC class II-dependent antigen presentation, and reduces IFN-gamma and TNF-alpha-producing CD4(+) T cells during infection in C57BL/6J mice. The chain is Transporter PPE51 (PPE51) from Mycobacterium tuberculosis (strain CDC 1551 / Oshkosh).